The chain runs to 109 residues: Elongation factor G, chloroplastic (109 aa).

The protein belongs to the GTP-binding elongation factor family. EF-G/EF-2 subfamily.

It is found in the plastid. The protein resides in the chloroplast. Its pathway is protein biosynthesis; polypeptide chain elongation. Its function is as follows. Chloroplast-localized elongation factor EF-G involved in protein synthesis in plastids. Catalyzes the GTP-dependent ribosomal translocation step during translation elongation. During this step, the ribosome changes from the pre-translocational (PRE) to the post-translocational (POST) state as the newly formed A-site-bound peptidyl-tRNA and P-site-bound deacylated tRNA move to the P and E sites, respectively. Catalyzes the coordinated movement of the two tRNA molecules, the mRNA and conformational changes in the ribosome. This Arachis hypogaea (Peanut) protein is Elongation factor G, chloroplastic.